A 411-amino-acid chain; its full sequence is Lissencephaly-1 homolog (411 aa).

In terms of domain architecture, LisH spans 9–41 (QREELNQAIADYLGSNGYSSALEAFRKEADISG). Positions 56-83 (TSVIRLQKKVMELEAKLSEAEKEVIEGA) form a coiled coil. 7 WD repeats span residues 106-147 (GHRA…RSLK), 149-187 (HTSS…DCVK), 191-230 (GHDH…CVKT), 233-272 (GHRE…CKAE), 275-334 (AHDH…CLFV), 337-376 (GHDN…FMKT), and 379-411 (AHQH…WECR).

It belongs to the WD repeat LIS1/nudF family.

The protein resides in the cytoplasm. Its subcellular location is the cytoskeleton. It is found in the microtubule organizing center. It localises to the centrosome. Functionally, positively regulates the activity of the minus-end directed microtubule motor protein dynein. May enhance dynein-mediated microtubule sliding by targeting dynein to the microtubule plus end. Required for several dynein- and microtubule-dependent processes. The polypeptide is Lissencephaly-1 homolog (Glossina morsitans morsitans (Savannah tsetse fly)).